Here is a 409-residue protein sequence, read N- to C-terminus: NADH-quinone oxidoreductase subunit D (409 aa).

The protein belongs to the complex I 49 kDa subunit family. As to quaternary structure, NDH-1 is composed of 14 different subunits. Subunits NuoB, C, D, E, F, and G constitute the peripheral sector of the complex.

Its subcellular location is the cell inner membrane. It catalyses the reaction a quinone + NADH + 5 H(+)(in) = a quinol + NAD(+) + 4 H(+)(out). NDH-1 shuttles electrons from NADH, via FMN and iron-sulfur (Fe-S) centers, to quinones in the respiratory chain. The immediate electron acceptor for the enzyme in this species is believed to be ubiquinone. Couples the redox reaction to proton translocation (for every two electrons transferred, four hydrogen ions are translocated across the cytoplasmic membrane), and thus conserves the redox energy in a proton gradient. The chain is NADH-quinone oxidoreductase subunit D from Helicobacter acinonychis (strain Sheeba).